The following is a 240-amino-acid chain: Small ribosomal subunit protein uS3 (240 aa).

The region spanning 39–109 (IRQYVEKNLS…QIRINVVEVA (71 aa)) is the KH type-2 domain. The disordered stretch occupies residues 214–240 (EEQAPAQPATTPKRQRRRQQFEDRSNE).

This sequence belongs to the universal ribosomal protein uS3 family. Part of the 30S ribosomal subunit. Forms a tight complex with proteins S10 and S14.

Binds the lower part of the 30S subunit head. Binds mRNA in the 70S ribosome, positioning it for translation. This chain is Small ribosomal subunit protein uS3, found in Gloeothece citriformis (strain PCC 7424) (Cyanothece sp. (strain PCC 7424)).